A 122-amino-acid polypeptide reads, in one-letter code: Large ribosomal subunit protein uL14c (122 aa).

This sequence belongs to the universal ribosomal protein uL14 family. Part of the 50S ribosomal subunit.

It localises to the plastid. It is found in the chloroplast. Functionally, binds to 23S rRNA. In Calycanthus floridus var. glaucus (Eastern sweetshrub), this protein is Large ribosomal subunit protein uL14c.